Consider the following 225-residue polypeptide: Urease accessory protein UreE (225 aa).

2 stretches are compositionally biased toward basic and acidic residues: residues 189–202 (HSHDFMGHSHEHEG) and 212–225 (NSHDNEHDEHHSRR). The segment at 189–225 (HSHDFMGHSHEHEGHRHVHNHAGNSHDNEHDEHHSRR) is disordered.

This sequence belongs to the UreE family.

It is found in the cytoplasm. Involved in urease metallocenter assembly. Binds nickel. Probably functions as a nickel donor during metallocenter assembly. The protein is Urease accessory protein UreE of Edwardsiella ictaluri.